Consider the following 505-residue polypeptide: Glutamate--tRNA ligase (505 aa).

The short motif at 11–21 is the 'HIGH' region element; that stretch reads PSPTGPLHIGG. Residues 260–264 carry the 'KMSKS' region motif; sequence KLSKR. Lys-263 contributes to the ATP binding site.

This sequence belongs to the class-I aminoacyl-tRNA synthetase family. Glutamate--tRNA ligase type 1 subfamily. In terms of assembly, monomer.

Its subcellular location is the cytoplasm. It catalyses the reaction tRNA(Glu) + L-glutamate + ATP = L-glutamyl-tRNA(Glu) + AMP + diphosphate. Its function is as follows. Catalyzes the attachment of glutamate to tRNA(Glu) in a two-step reaction: glutamate is first activated by ATP to form Glu-AMP and then transferred to the acceptor end of tRNA(Glu). The protein is Glutamate--tRNA ligase of Christiangramia forsetii (strain DSM 17595 / CGMCC 1.15422 / KT0803) (Gramella forsetii).